Reading from the N-terminus, the 416-residue chain is Gasdermin-B (416 aa).

Residues 1–280 (MFSVFEEITR…EKRKDVLNSL (280 aa)) form a triggers pyroptosis region. Beta stranded transmembrane passes span 83-101 (EFQI…VRLP) and 102-125 (KEIT…ENRI). Residues Lys166, Lys177, Lys190, and Lys192 each participate in a (Microbial infection) Glycyl lysine isopeptide (Lys-Gly) (interchain with G-Cter in ubiquitin) cross-link. 2 consecutive transmembrane segments (beta stranded) span residues 167–183 (EETL…SQIS) and 184–198 (QGHL…REVT). The disordered stretch occupies residues 229 to 250 (KSFPEEKDGASSCLGKSLGSED). A coiled-coil region spans residues 248-276 (SEDSRNMKEKLEDMESVLKDLTEEKRKDV). Met308 is covalently cross-linked ((Microbial infection) Glycyl lysine isopeptide (Lys-Gly) (interchain with G-Cter in ubiquitin)).

The protein belongs to the gasdermin family. In terms of assembly, homooligomer; homooligomeric ring-shaped pore complex containing 24-26 subunits when inserted in the membrane. In terms of processing, cleavage by granzyme A (GZMA) relieves autoinhibition by releasing the N-terminal moiety (Gasdermin-B, N-terminal) that initiates pyroptosis. Not cleaved by other granzymes. Major cleavage site takes places after Lys-244; a minor cleavage site takes place after Lys-229. Cleavage by neutrophil elastase ELANE, inhibits its ability to trigger pyroptosis. Palmitoylated. Post-translationally, (Microbial infection) Ubiquitinated by S.flexneri IpaH7.8, leading to its degradation by the proteasome, thereby preventing its ability to form pores in bacterial-derived membranes. In terms of tissue distribution, in the gastrointestinal tract, expressed in proliferating cells, including in the basal cell layer of esophagus and in isthmus/neck of stomach.

Its subcellular location is the cytoplasm. It is found in the cell membrane. Its activity is regulated as follows. The full-length protein before cleavage is inactive: intramolecular interactions between N- and C-terminal domains mediate autoinhibition in the absence of activation signal. The intrinsic pyroptosis-inducing activity is carried by the released N-terminal moiety (Gasdermin-B, N-terminal) following cleavage by granzyme A (GZMA). In terms of biological role, precursor of a pore-forming protein that acts as a downstream mediator of granzyme-mediated cell death. This form constitutes the precursor of the pore-forming protein: upon cleavage, the released N-terminal moiety (Gasdermin-B, N-terminal) binds to membranes and forms pores, triggering pyroptosis. Also acts as a regulator of epithelial cell repair independently of programmed cell death: translocates to the plasma membrane and promotes epithelial maintenance and repair by regulating PTK2/FAK-mediated phosphorylation of PDGFA. Pore-forming protein produced by cleavage by granzyme A (GZMA), which causes membrane permeabilization and pyroptosis in target cells of cytotoxic T and natural killer (NK) cells. Key downstream mediator of granzyme-mediated cell death: (1) granzyme A (GZMA), delivered to target cells from cytotoxic T- and NK-cells, (2) specifically cleaves Gasdermin-B to generate this form. After cleavage, moves to the plasma membrane, homooligomerizes within the membrane and forms pores of 10-15 nanometers (nm) of inner diameter, triggering pyroptosis. The different isoforms recognize and bind different phospholipids on membranes, promoting cell death of different target cells. Its function is as follows. Precursor of a pore-forming protein that acts as a downstream mediator of granzyme-mediated cell death and mediates pyroptosis. Following cleavage and activation by granzyme A (GZMA), the N-terminal part binds to membrane inner leaflet lipids, homooligomerizes within the human plasma membrane and forms pores of 10-15 nanometers (nm) of inner diameter, triggering pyroptosis. Recognizes and binds membrane inner leaflet lipids of human cells, such as phosphatidylinositol 4-phosphate, phosphatidylinositol 5-phosphate, bisphosphorylated phosphatidylinositols, such as phosphatidylinositol (4,5)-bisphosphate, and more weakly to phosphatidic acid. Also binds sufatide, a component of the apical membrane of epithelial cells. Functionally, precursor of a pore-forming protein that acts as a downstream mediator of granzyme-mediated cell death and mediates pyroptosis of human cells. Following cleavage and activation by granzyme A (GZMA), the N-terminal part binds to membrane inner leaflet lipids, homooligomerizes within the human plasma membrane and forms pores of 10-15 nanometers (nm) of inner diameter, triggering pyroptosis. In terms of biological role, precursor of a pore-forming protein that acts as a downstream mediator of granzyme-mediated cell death and specifically mediates cell death of Gram-negative bacteria in response to infection. Following cleavage and activation by granzyme A (GZMA), the N-terminal part recognizes and binds phospholipids found on Gram-negative bacterial membranes, such as lipid A and cariolipin, homooligomerizes within the bacterial membranes and forms pores, triggering pyroptosis followed by cell death. In contrast to isoform 4, does not bind to membrane inner leaflet lipids of host human cell, such as phosphatidylinositol 4-phosphate, phosphatidylinositol 5-phosphate, bisphosphorylated phosphatidylinositols, such as phosphatidylinositol (4,5)-bisphosphate. Not able to trigger pyroptosis. The polypeptide is Gasdermin-B (Homo sapiens (Human)).